We begin with the raw amino-acid sequence, 370 residues long: Histidinol-phosphate aminotransferase (370 aa).

The residue at position 229 (Lys-229) is an N6-(pyridoxal phosphate)lysine.

This sequence belongs to the class-II pyridoxal-phosphate-dependent aminotransferase family. Histidinol-phosphate aminotransferase subfamily. As to quaternary structure, homodimer. Requires pyridoxal 5'-phosphate as cofactor.

The catalysed reaction is L-histidinol phosphate + 2-oxoglutarate = 3-(imidazol-4-yl)-2-oxopropyl phosphate + L-glutamate. It functions in the pathway amino-acid biosynthesis; L-histidine biosynthesis; L-histidine from 5-phospho-alpha-D-ribose 1-diphosphate: step 7/9. This chain is Histidinol-phosphate aminotransferase, found in Helicobacter hepaticus (strain ATCC 51449 / 3B1).